The primary structure comprises 469 residues: Ribulose bisphosphate carboxylase large chain (469 aa).

The propeptide occupies 1–2 (MS). P3 bears the N-acetylproline mark. An N6,N6,N6-trimethyllysine modification is found at K14. Substrate is bound by residues N123 and T173. K175 acts as the Proton acceptor in catalysis. K177 contributes to the substrate binding site. Residues K201, D203, and E204 each contribute to the Mg(2+) site. An N6-carboxylysine modification is found at K201. Residue H294 is the Proton acceptor of the active site. Substrate contacts are provided by R295, H327, and S379.

This sequence belongs to the RuBisCO large chain family. Type I subfamily. Heterohexadecamer of 8 large chains and 8 small chains; disulfide-linked. The disulfide link is formed within the large subunit homodimers. It depends on Mg(2+) as a cofactor. Post-translationally, the disulfide bond which can form in the large chain dimeric partners within the hexadecamer appears to be associated with oxidative stress and protein turnover.

Its subcellular location is the plastid. The protein localises to the chloroplast. It catalyses the reaction 2 (2R)-3-phosphoglycerate + 2 H(+) = D-ribulose 1,5-bisphosphate + CO2 + H2O. It carries out the reaction D-ribulose 1,5-bisphosphate + O2 = 2-phosphoglycolate + (2R)-3-phosphoglycerate + 2 H(+). Functionally, ruBisCO catalyzes two reactions: the carboxylation of D-ribulose 1,5-bisphosphate, the primary event in carbon dioxide fixation, as well as the oxidative fragmentation of the pentose substrate in the photorespiration process. Both reactions occur simultaneously and in competition at the same active site. The sequence is that of Ribulose bisphosphate carboxylase large chain from Atriplex patula (Common orache).